Reading from the N-terminus, the 371-residue chain is Glycosyltransferase 8 domain-containing protein 1 (371 aa).

Over Met1–Lys5 the chain is Cytoplasmic. A helical; Signal-anchor for type II membrane protein membrane pass occupies residues Val6 to Phe26. The Lumenal portion of the chain corresponds to Leu27–Lys371. A glycan (N-linked (GlcNAc...) asparagine) is linked at Asn257.

The protein belongs to the glycosyltransferase 8 family.

The protein resides in the membrane. This chain is Glycosyltransferase 8 domain-containing protein 1 (Glt8d1), found in Rattus norvegicus (Rat).